We begin with the raw amino-acid sequence, 438 residues long: UDP-N-acetylmuramoylalanine--D-glutamate ligase (438 aa).

ATP is bound at residue 112–118; sequence GSNGKST.

This sequence belongs to the MurCDEF family.

Its subcellular location is the cytoplasm. The enzyme catalyses UDP-N-acetyl-alpha-D-muramoyl-L-alanine + D-glutamate + ATP = UDP-N-acetyl-alpha-D-muramoyl-L-alanyl-D-glutamate + ADP + phosphate + H(+). Its pathway is cell wall biogenesis; peptidoglycan biosynthesis. Its function is as follows. Cell wall formation. Catalyzes the addition of glutamate to the nucleotide precursor UDP-N-acetylmuramoyl-L-alanine (UMA). The sequence is that of UDP-N-acetylmuramoylalanine--D-glutamate ligase from Salmonella paratyphi A (strain ATCC 9150 / SARB42).